The primary structure comprises 129 residues: uncharacterized protein (129 aa).

The span at 85-108 shows a compositional bias: low complexity; that stretch reads SSAADSDDSSSCSECDSDALLSDD. The tract at residues 85-110 is disordered; it reads SSAADSDDSSSCSECDSDALLSDDGP.

This is an uncharacterized protein from Microplitis demolitor (Parasitoid wasp).